A 211-amino-acid chain; its full sequence is Uridine kinase (211 aa).

Residue 12 to 19 (GGSGSGKT) participates in ATP binding.

Belongs to the uridine kinase family.

The protein resides in the cytoplasm. It carries out the reaction uridine + ATP = UMP + ADP + H(+). It catalyses the reaction cytidine + ATP = CMP + ADP + H(+). The protein operates within pyrimidine metabolism; CTP biosynthesis via salvage pathway; CTP from cytidine: step 1/3. It participates in pyrimidine metabolism; UMP biosynthesis via salvage pathway; UMP from uridine: step 1/1. The chain is Uridine kinase from Geobacillus sp. (strain WCH70).